We begin with the raw amino-acid sequence, 1016 residues long: MGSRIKQNPETTFEVYVEVAYPRTGGTLSDPEVQRQFPEDYSDQEVLQTLTKFCFPFYVDSLTVSQVGQNFTFVLTDIDSKQRFGFCRLSSGAKSCFCILSYLPWFEVFYKLLNILADYTTKRQESQWNELLETLHRLPIPDPGVSVHLSVHSYFTVPDSRELPSIPENRNLTEYFVAVDVNNMLHLYASMLYERRILIICSKLSTLTACIHGSAAMLYPMYWQHVYIPVLPPHLLDYCCAPMPYLIGIHLSLMEKVRNMALDDVVILNVDTNTLETPFDDLQSLPNDVISSLKNRLKKVSTTTGDGVARAFLKAQAAFFGSYRNALKIEPEEPITFSEEAFVSHYRSGAMKQFLQNATQLQLFKQFIDGRLDLLNSGEGFSDVFEEEINMGEYAGSDKLYHQWLSTVRKGSGAILNTVKTKANPAMKTVYKFAKDHAKMGIKEVKNRLKQKDITENGCVSSAEDPLPKTMPSPQAETQDPRLREDRRPITVHFGQVRPPRPHVVRRPKSNITVEGRRTSVSSPEQPQPYRTLKESDSAEGDETESPEQLVREPWGPTPAPPDRAASIDLLEDVFSSLDVEAPLQPLGQAKSLEDLRAPKDLREQPGSFDYQRLDLCRSERGLSMAAALKLAHPYTKLWSLGQDDMAIPSKPSITSPEKPSALLGTSPALPLRPQNQEGILSPSIKEETPIPTPGSITIPRPQGRKTPELGIVPPPPTARPAKLQAAGGPLGDFSSEPLQMDRERQAALSPALLSGLLPRAVPQGPTELLQPPSPAPGAAGTGSDALLALLDPLNTAWSGSTIPSHPATPSAATPFIPQLSFPPTVTPTPFVQTPLNPFVPSVPVVPPSMPLSSTPARPFGTPPASLGPAYAPSILLSSSGFYAPHRSQPNLSALSMPNLFGQIPMGAHTSPLQPLGPPAVAPSRIRTLPLARSSARAAEAKQGLALRPGESPLLPPRPPQSLQPTPQPSVPTQARDPFEDLLRKTKQDVSPSPAPALAPASTSVEQLRRQWETFE.

The 133-residue stretch at 13 to 145 (FEVYVEVAYP…HRLPIPDPGV (133 aa)) folds into the uDENN domain. One can recognise a cDENN domain in the interval 162-298 (ELPSIPENRN…VISSLKNRLK (137 aa)). The region spanning 300 to 378 (VSTTTGDGVA…DGRLDLLNSG (79 aa)) is the dDENN domain. The FXDXF motif signature appears at 381 to 385 (FSDVF). Positions 453–565 (DITENGCVSS…GPTPAPPDRA (113 aa)) are disordered. The residue at position 473 (S473) is a Phosphoserine. Residues 479-489 (QDPRLREDRRP) are compositionally biased toward basic and acidic residues. Residues 500–509 (PRPHVVRRPK) show a composition bias toward basic residues. T519 bears the Phosphothreonine mark. Phosphoserine occurs at positions 520, 522, 523, 536, 538, and 546. The short motif at 569–578 (DLLEDVFSSL) is the Clathrin box element. S592 is subject to Phosphoserine. The segment at 681–737 (LSPSIKEETPIPTPGSITIPRPQGRKTPELGIVPPPPTARPAKLQAAGGPLGDFSSE) is disordered. The residue at position 750 (S750) is a Phosphoserine. R760 bears the Omega-N-methylarginine mark. Disordered stretches follow at residues 763–783 (PQGP…AGTG) and 935–1016 (SARA…ETFE). Positions 954-970 (LLPPRPPQSLQPTPQPS) are enriched in pro residues. Basic and acidic residues-rich tracts occupy residues 977–988 (DPFEDLLRKTKQ) and 1007–1016 (QLRRQWETFE).

In terms of assembly, interacts with RAB35. Interacts with clathrin and with the adapter protein complex 2, AP-2. Interacts with ITSN1 and SH3GL2. Interacts (when phosphorylated) with YWHAE. Phosphorylated on serine and/or threonine in an Akt-dependent manner. Phosphorylation probably regulates the guanine nucleotide exchange factor (GEF) activity, possibly by disrupting an intramolecular interaction between the DENN domain and the C-terminus of the protein, thereby relieving the autoinhibition.

The protein resides in the cytoplasmic vesicle. It localises to the clathrin-coated vesicle membrane. It is found in the presynaptic cell membrane. With respect to regulation, the guanine nucleotide exchange factor (GEF) activity is autoinhibited. Autoinhibition may be the result of intramolecular interaction between the DENN domain and the C-terminus, which is disrupted upon phosphorylation. Activation is regulated by Akt activation. Guanine nucleotide exchange factor (GEF) regulating clathrin-mediated endocytosis through RAB35 activation. Promotes the exchange of GDP to GTP, converting inactive GDP-bound RAB35 into its active GTP-bound form. Regulates clathrin-mediated endocytosis of synaptic vesicles and mediates exit from early endosomes. Binds phosphatidylinositol-phosphates (PtdInsPs), with some preference for PtdIns(3)P. This chain is DENN domain-containing protein 1A (Dennd1a), found in Mus musculus (Mouse).